A 380-amino-acid chain; its full sequence is Cytochrome b (380 aa).

A run of 4 helical transmembrane segments spans residues phenylalanine 33–methionine 53, tryptophan 77–isoleucine 98, tryptophan 113–leucine 133, and phenylalanine 178–leucine 198. Residues histidine 83 and histidine 97 each contribute to the heme b site. Heme b is bound by residues histidine 182 and histidine 196. Histidine 201 lines the a ubiquinone pocket. Helical transmembrane passes span tyrosine 226–alanine 246, leucine 288–histidine 308, leucine 320–glycine 340, and phenylalanine 347–proline 367.

This sequence belongs to the cytochrome b family. In terms of assembly, the cytochrome bc1 complex contains 3 respiratory subunits (MT-CYB, CYC1 and UQCRFS1), 2 core proteins (UQCRC1 and UQCRC2) and probably 6 low-molecular weight proteins. Heme b serves as cofactor.

It localises to the mitochondrion inner membrane. Functionally, component of the ubiquinol-cytochrome c reductase complex (complex III or cytochrome b-c1 complex) that is part of the mitochondrial respiratory chain. The b-c1 complex mediates electron transfer from ubiquinol to cytochrome c. Contributes to the generation of a proton gradient across the mitochondrial membrane that is then used for ATP synthesis. This Salmo trutta (Brown trout) protein is Cytochrome b (mt-cyb).